We begin with the raw amino-acid sequence, 192 residues long: Nucleoside triphosphate pyrophosphatase (192 aa).

The active-site Proton acceptor is the Asp-73.

The protein belongs to the Maf family. It depends on a divalent metal cation as a cofactor.

The protein localises to the cytoplasm. The catalysed reaction is a ribonucleoside 5'-triphosphate + H2O = a ribonucleoside 5'-phosphate + diphosphate + H(+). It catalyses the reaction a 2'-deoxyribonucleoside 5'-triphosphate + H2O = a 2'-deoxyribonucleoside 5'-phosphate + diphosphate + H(+). Its function is as follows. Nucleoside triphosphate pyrophosphatase. May have a dual role in cell division arrest and in preventing the incorporation of modified nucleotides into cellular nucleic acids. The protein is Nucleoside triphosphate pyrophosphatase of Ehrlichia chaffeensis (strain ATCC CRL-10679 / Arkansas).